A 313-amino-acid polypeptide reads, in one-letter code: Ribosomal protein L11 methyltransferase (313 aa).

Residues threonine 164, glycine 185, aspartate 207, and asparagine 249 each coordinate S-adenosyl-L-methionine.

Belongs to the methyltransferase superfamily. PrmA family.

The protein resides in the cytoplasm. The enzyme catalyses L-lysyl-[protein] + 3 S-adenosyl-L-methionine = N(6),N(6),N(6)-trimethyl-L-lysyl-[protein] + 3 S-adenosyl-L-homocysteine + 3 H(+). In terms of biological role, methylates ribosomal protein L11. This Clostridium botulinum (strain Alaska E43 / Type E3) protein is Ribosomal protein L11 methyltransferase.